The following is a 291-amino-acid chain: HTH-type transcriptional regulator DgcR (291 aa).

The HTH lysR-type domain occupies 1–58 (MRLRHIEVFHAIYTTGSITNAAKALHVSQPSVSKVLSHAEMQLGFKLFERVKGRLIPT). Residues 18 to 37 (ITNAAKALHVSQPSVSKVLS) constitute a DNA-binding region (H-T-H motif).

The protein belongs to the LysR transcriptional regulatory family.

In terms of biological role, transcriptional regulator that positively regulates the expression of the D-Glu gene cluster (DGC). The cluster includes dgcN and dgcA, which are involved in a deamination-independent D-glutamate degradation pathway, dgcR itself, dgcT, dgcP and dgcH. Acts by binding the consensus sequence upstream of dgcR, dgcT, dgcP and dgcH. This is HTH-type transcriptional regulator DgcR from Pseudoalteromonas sp.